Here is a 208-residue protein sequence, read N- to C-terminus: 3-demethoxyubiquinol 3-hydroxylase (208 aa).

Residues Glu57, Glu87, His90, Glu139, Glu171, and His174 each coordinate Fe cation.

Belongs to the COQ7 family. Fe cation is required as a cofactor.

It is found in the cell membrane. It catalyses the reaction a 5-methoxy-2-methyl-3-(all-trans-polyprenyl)benzene-1,4-diol + AH2 + O2 = a 3-demethylubiquinol + A + H2O. It functions in the pathway cofactor biosynthesis; ubiquinone biosynthesis. In terms of biological role, catalyzes the hydroxylation of 2-nonaprenyl-3-methyl-6-methoxy-1,4-benzoquinol during ubiquinone biosynthesis. The chain is 3-demethoxyubiquinol 3-hydroxylase from Burkholderia pseudomallei (strain 1106a).